The following is a 115-amino-acid chain: DNA-directed RNA polymerase II subunit RPB11-b2 (115 aa).

This sequence belongs to the archaeal Rpo11/eukaryotic RPB11/RPC19 RNA polymerase subunit family. Component of the RNA polymerase II (Pol II) complex consisting of 12 subunits.

The protein resides in the nucleus. DNA-dependent RNA polymerase catalyzes the transcription of DNA into RNA using the four ribonucleoside triphosphates as substrates. Component of RNA polymerase II which synthesizes mRNA precursors and many functional non-coding RNAs. Pol II is the central component of the basal RNA polymerase II transcription machinery. It is composed of mobile elements that move relative to each other. RPB11 is part of the core element with the central large cleft. This Homo sapiens (Human) protein is DNA-directed RNA polymerase II subunit RPB11-b2 (POLR2J3).